A 156-amino-acid polypeptide reads, in one-letter code: Small ribosomal subunit protein uS7 (156 aa).

Belongs to the universal ribosomal protein uS7 family. In terms of assembly, part of the 30S ribosomal subunit. Contacts proteins S9 and S11.

Its function is as follows. One of the primary rRNA binding proteins, it binds directly to 16S rRNA where it nucleates assembly of the head domain of the 30S subunit. Is located at the subunit interface close to the decoding center, probably blocks exit of the E-site tRNA. The protein is Small ribosomal subunit protein uS7 of Anoxybacillus flavithermus (strain DSM 21510 / WK1).